Here is a 689-residue protein sequence, read N- to C-terminus: DNA ligase (689 aa).

NAD(+) contacts are provided by residues 32 to 36 (DAEYD), 81 to 82 (SL), and E113. K115 (N6-AMP-lysine intermediate) is an active-site residue. NAD(+)-binding residues include R136, E176, K306, and K330. Zn(2+) contacts are provided by C424, C427, C442, and C448. Residues 606 to 689 (AEELPLAEQI…ALLAEHGITI (84 aa)) enclose the BRCT domain.

It belongs to the NAD-dependent DNA ligase family. LigA subfamily. The cofactor is Mg(2+). Mn(2+) serves as cofactor.

It carries out the reaction NAD(+) + (deoxyribonucleotide)n-3'-hydroxyl + 5'-phospho-(deoxyribonucleotide)m = (deoxyribonucleotide)n+m + AMP + beta-nicotinamide D-nucleotide.. In terms of biological role, DNA ligase that catalyzes the formation of phosphodiester linkages between 5'-phosphoryl and 3'-hydroxyl groups in double-stranded DNA using NAD as a coenzyme and as the energy source for the reaction. It is essential for DNA replication and repair of damaged DNA. The sequence is that of DNA ligase from Colwellia psychrerythraea (strain 34H / ATCC BAA-681) (Vibrio psychroerythus).